A 259-amino-acid polypeptide reads, in one-letter code: Thiazole synthase (259 aa).

The active-site Schiff-base intermediate with DXP is K95. Residues G156, 182 to 183 (AG), and 204 to 205 (AS) contribute to the 1-deoxy-D-xylulose 5-phosphate site.

Belongs to the ThiG family. As to quaternary structure, homotetramer. Forms heterodimers with either ThiH or ThiS.

It localises to the cytoplasm. The enzyme catalyses [ThiS sulfur-carrier protein]-C-terminal-Gly-aminoethanethioate + 2-iminoacetate + 1-deoxy-D-xylulose 5-phosphate = [ThiS sulfur-carrier protein]-C-terminal Gly-Gly + 2-[(2R,5Z)-2-carboxy-4-methylthiazol-5(2H)-ylidene]ethyl phosphate + 2 H2O + H(+). It functions in the pathway cofactor biosynthesis; thiamine diphosphate biosynthesis. Its function is as follows. Catalyzes the rearrangement of 1-deoxy-D-xylulose 5-phosphate (DXP) to produce the thiazole phosphate moiety of thiamine. Sulfur is provided by the thiocarboxylate moiety of the carrier protein ThiS. In vitro, sulfur can be provided by H(2)S. This is Thiazole synthase from Corynebacterium aurimucosum (strain ATCC 700975 / DSM 44827 / CIP 107346 / CN-1) (Corynebacterium nigricans).